We begin with the raw amino-acid sequence, 53 residues long: MSQVKLQPKKKYGHIDGCVRCGRKRGIVRKYGLHLCRQCFRETARQLGFEKYS.

Zn(2+) is bound by residues Cys-18, Cys-21, Cys-36, and Cys-39.

Belongs to the universal ribosomal protein uS14 family. Zinc-binding uS14 subfamily. In terms of assembly, part of the 30S ribosomal subunit. The cofactor is Zn(2+).

In terms of biological role, binds 16S rRNA, required for the assembly of 30S particles. The sequence is that of Small ribosomal subunit protein uS14 from Thermoplasma volcanium (strain ATCC 51530 / DSM 4299 / JCM 9571 / NBRC 15438 / GSS1).